Reading from the N-terminus, the 98-residue chain is UPF0213 protein LACR_2011 (98 aa).

The 78-residue stretch at 2 to 79 (NTHFTYVLQC…KLVRQQKLKL (78 aa)) folds into the GIY-YIG domain.

The protein belongs to the UPF0213 family.

This is UPF0213 protein LACR_2011 from Lactococcus lactis subsp. cremoris (strain SK11).